The sequence spans 412 residues: Putative potassium channel protein RPA4233 (412 aa).

Transmembrane regions (helical) follow at residues 35 to 55, 65 to 85, 164 to 184, 202 to 222, and 225 to 245; these read FIVFFIVLSVGITVMESVPAM, ALELLCLVMFSIEYYIRIWIA, LMACLVILACATLVSATAMHI, WWAIVTLSTIGYGDVVPATGI, and MVASATIICGLIMIALPVGIV. Positions 210–215 match the Selectivity filter motif; it reads TIGYGD. 270–388 provides a ligand contact to a nucleoside 3',5'-cyclic phosphate; sequence LFSHLTAGDI…RKINQIVEGR (119 aa).

Belongs to the potassium channel family.

The protein resides in the cell membrane. This is Putative potassium channel protein RPA4233 from Rhodopseudomonas palustris (strain ATCC BAA-98 / CGA009).